A 266-amino-acid chain; its full sequence is MKQAIGFIDSGVGGLTVVREVLKQLPHEQVYYLGDTARCPYGPRDKEEVAKFTWEMTNFLVDRGIKMLVIACNTATAAALYDIREKLDIPVIGVIQPGSRAALKATRNNKIGVLGTLGTVESMAYPTALKGLNRRVEVDSLACPKFVSVVESGEYKSAIAKKVVAESLLPLKSTKIDTVILGCTHYPLLKPIIENFMGDGVAVINSGEETASEVSALLDYHNLLDATDEEIEHRFFTTGSTQIFKDIAKDWLNMPDMTVEHIKLGK.

Substrate-binding positions include 9–10 (DS) and 41–42 (YG). Catalysis depends on Cys72, which acts as the Proton donor/acceptor. 73-74 (NT) serves as a coordination point for substrate. Cys183 acts as the Proton donor/acceptor in catalysis. 184-185 (TH) contacts substrate.

It belongs to the aspartate/glutamate racemases family.

The enzyme catalyses L-glutamate = D-glutamate. The protein operates within cell wall biogenesis; peptidoglycan biosynthesis. Provides the (R)-glutamate required for cell wall biosynthesis. The sequence is that of Glutamate racemase from Listeria monocytogenes serotype 4b (strain CLIP80459).